A 173-amino-acid chain; its full sequence is Alpha-crystallin A chain (173 aa).

Methionine 1 is subject to N-acetylmethionine. Residues 1–63 (MDVTIQHPWF…RTVLDSGISE (63 aa)) are required for complex formation with BFSP1 and BFSP2. At glutamine 6 the chain carries Deamidated glutamine; partial. Position 45 is a phosphoserine (serine 45). A Deamidated glutamine; partial modification is found at glutamine 50. The 111-residue stretch at 52-162 (LFRTVLDSGI…GHSERAIPVS (111 aa)) folds into the sHSP domain. Residue lysine 70 is modified to N6-acetyllysine. At glutamine 90 the chain carries Deamidated glutamine; partial. At lysine 99 the chain carries N6-acetyllysine. Zn(2+)-binding residues include histidine 100, glutamate 102, and histidine 107. At serine 122 the chain carries Phosphoserine. Asparagine 123 is subject to Deamidated asparagine; partial. Residues 145-173 (KVQSGLDAGHSERAIPVSREEKPSSAPSS) form a disordered region. The residue at position 147 (glutamine 147) is a Deamidated glutamine; partial. A compositionally biased stretch (basic and acidic residues) spans 153 to 167 (GHSERAIPVSREEKP). Residue histidine 154 participates in Zn(2+) binding. A glycan (O-linked (GlcNAc) serine) is linked at serine 162.

The protein belongs to the small heat shock protein (HSP20) family. As to quaternary structure, heteromer composed of three CRYAA and one CRYAB subunits. Inter-subunit bridging via zinc ions enhances stability, which is crucial as there is no protein turn over in the lens. Can also form homodimers and homotetramers (dimers of dimers) which serve as the building blocks of homooligomers. Within homooligomers, the zinc-binding motif is created from residues of 3 different molecules. His-100 and Glu-102 from one molecule are ligands of the zinc ion, and His-107 and His-154 residues from additional molecules complete the site with tetrahedral coordination geometry. Part of a complex required for lens intermediate filament formation composed of BFSP1, BFSP2 and CRYAA. In terms of processing, acetylation at Lys-70 may increase chaperone activity. Post-translationally, undergoes age-dependent proteolytical cleavage at the C-terminus.

Its subcellular location is the cytoplasm. The protein resides in the nucleus. Its function is as follows. Contributes to the transparency and refractive index of the lens. Acts as a chaperone, preventing aggregation of various proteins under a wide range of stress conditions. Required for the correct formation of lens intermediate filaments as part of a complex composed of BFSP1, BFSP2 and CRYAA. The sequence is that of Alpha-crystallin A chain (CRYAA) from Ochotona princeps (Southern American pika).